The primary structure comprises 301 residues: Tyrosine recombinase XerD (301 aa).

Residues 6–89 (PLHQQLIEQF…ALKVFFHFLK (84 aa)) form the Core-binding (CB) domain. The 186-residue stretch at 108–293 (RLPSILSTEE…ASESIIEKFH (186 aa)) folds into the Tyr recombinase domain. Catalysis depends on residues R152, K174, H245, R248, and H271. Y280 functions as the O-(3'-phospho-DNA)-tyrosine intermediate in the catalytic mechanism.

The protein belongs to the 'phage' integrase family. XerD subfamily. In terms of assembly, forms a cyclic heterotetrameric complex composed of two molecules of XerC and two molecules of XerD.

It localises to the cytoplasm. In terms of biological role, site-specific tyrosine recombinase, which acts by catalyzing the cutting and rejoining of the recombining DNA molecules. The XerC-XerD complex is essential to convert dimers of the bacterial chromosome into monomers to permit their segregation at cell division. It also contributes to the segregational stability of plasmids. The polypeptide is Tyrosine recombinase XerD (Chlamydia muridarum (strain MoPn / Nigg)).